We begin with the raw amino-acid sequence, 162 residues long: Crossover junction endodeoxyribonuclease RuvC (162 aa).

Catalysis depends on residues D8, E69, and H141. The Mg(2+) site is built by D8, E69, and H141.

This sequence belongs to the RuvC family. In terms of assembly, homodimer which binds Holliday junction (HJ) DNA. The HJ becomes 2-fold symmetrical on binding to RuvC with unstacked arms; it has a different conformation from HJ DNA in complex with RuvA. In the full resolvosome a probable DNA-RuvA(4)-RuvB(12)-RuvC(2) complex forms which resolves the HJ. Mg(2+) is required as a cofactor.

Its subcellular location is the cytoplasm. It catalyses the reaction Endonucleolytic cleavage at a junction such as a reciprocal single-stranded crossover between two homologous DNA duplexes (Holliday junction).. Functionally, the RuvA-RuvB-RuvC complex processes Holliday junction (HJ) DNA during genetic recombination and DNA repair. Endonuclease that resolves HJ intermediates. Cleaves cruciform DNA by making single-stranded nicks across the HJ at symmetrical positions within the homologous arms, yielding a 5'-phosphate and a 3'-hydroxyl group; requires a central core of homology in the junction. The consensus cleavage sequence is 5'-(A/T)TT(C/G)-3'. Cleavage occurs on the 3'-side of the TT dinucleotide at the point of strand exchange. HJ branch migration catalyzed by RuvA-RuvB allows RuvC to scan DNA until it finds its consensus sequence, where it cleaves and resolves the cruciform DNA. The polypeptide is Crossover junction endodeoxyribonuclease RuvC (Wolbachia pipientis wMel).